Reading from the N-terminus, the 282-residue chain is Pantothenate synthetase (282 aa).

Position 30–37 (30–37 (MGYLHEGH)) interacts with ATP. His37 acts as the Proton donor in catalysis. Gln61 is a (R)-pantoate binding site. Beta-alanine is bound at residue Gln61. 147–150 (GMKD) is a binding site for ATP. Position 153 (Gln153) interacts with (R)-pantoate. ATP contacts are provided by residues Val176 and 184–187 (KSSR).

This sequence belongs to the pantothenate synthetase family. Homodimer.

It is found in the cytoplasm. The catalysed reaction is (R)-pantoate + beta-alanine + ATP = (R)-pantothenate + AMP + diphosphate + H(+). It functions in the pathway cofactor biosynthesis; (R)-pantothenate biosynthesis; (R)-pantothenate from (R)-pantoate and beta-alanine: step 1/1. Catalyzes the condensation of pantoate with beta-alanine in an ATP-dependent reaction via a pantoyl-adenylate intermediate. This Bacillus anthracis (strain A0248) protein is Pantothenate synthetase.